The sequence spans 246 residues: 3'(2'),5'-bisphosphate nucleotidase CysQ (246 aa).

Residues glutamate 64, aspartate 83, leucine 85, aspartate 86, and aspartate 205 each contribute to the Mg(2+) site. Glutamate 64 provides a ligand contact to substrate. Residues 85 to 88 (LDGT) and aspartate 205 each bind substrate.

This sequence belongs to the inositol monophosphatase superfamily. CysQ family. It depends on Mg(2+) as a cofactor.

It localises to the cell inner membrane. The enzyme catalyses adenosine 3',5'-bisphosphate + H2O = AMP + phosphate. Converts adenosine-3',5'-bisphosphate (PAP) to AMP. The chain is 3'(2'),5'-bisphosphate nucleotidase CysQ from Shigella flexneri.